Consider the following 505-residue polypeptide: ATP synthase subunit alpha (505 aa).

170-177 lines the ATP pocket; it reads GDRQTGKT.

This sequence belongs to the ATPase alpha/beta chains family. In terms of assembly, F-type ATPases have 2 components, CF(1) - the catalytic core - and CF(0) - the membrane proton channel. CF(1) has five subunits: alpha(3), beta(3), gamma(1), delta(1), epsilon(1). CF(0) has four main subunits: a(1), b(1), b'(1) and c(9-12).

It localises to the cellular thylakoid membrane. The catalysed reaction is ATP + H2O + 4 H(+)(in) = ADP + phosphate + 5 H(+)(out). Its function is as follows. Produces ATP from ADP in the presence of a proton gradient across the membrane. The alpha chain is a regulatory subunit. The chain is ATP synthase subunit alpha from Prochlorococcus marinus (strain SARG / CCMP1375 / SS120).